The chain runs to 571 residues: Alpha-1D adrenergic receptor (571 aa).

Residues 1–94 (MTFRDLLSVN…AVGGLVVSAQ (94 aa)) are Extracellular-facing. The tract at residues 13 to 75 (GSRSDGSAGG…SSAGEPGAAG (63 aa)) is disordered. A compositionally biased stretch (gly residues) spans 19-34 (SAGGASAGGSGGGSGG). The segment covering 35–47 (AAASEGRAVDGVP) has biased composition (low complexity). The segment covering 48–57 (GTAGSGGVVG) has biased composition (gly residues). N-linked (GlcNAc...) asparagine glycosylation is found at N64 and N81. The helical transmembrane segment at 95–120 (GVGVGVFLAAFILMAVAGNLLVILSV) threads the bilayer. Residues 121-132 (ACNRHLQTVTNY) lie on the Cytoplasmic side of the membrane. The chain crosses the membrane as a helical span at residues 133 to 158 (FIVNLAVADLLLSATVLPFSATMEVL). Residues 159 to 168 (GFWAFGRAFC) are Extracellular-facing. Residues 169–191 (DVWAAVDVLCCTASILSLCTISV) form a helical membrane-spanning segment. The Cytoplasmic segment spans residues 192–212 (DRYVGVRHSLKYPSIMTERKA). Residues 213 to 237 (AAILALLWAVAIVVSVGPLLGWKEP) form a helical membrane-spanning segment. The Extracellular segment spans residues 238–250 (VPPDERFCGITEE). Residues 251 to 274 (AGYAVFSSLCSFYLPMAVIVVMYC) traverse the membrane as a helical segment. Residues 275-348 (RVYVVARSTT…KFSREKKAAK (74 aa)) are Cytoplasmic-facing. Residues 349-373 (TLAIVVGVFVLCWFPFFFVLPLGSL) form a helical membrane-spanning segment. The Extracellular portion of the chain corresponds to 374-380 (FPQLKPS). A helical membrane pass occupies residues 381 to 405 (EGVFKVIFWLGYFNSCVNPLIYPCS). The Cytoplasmic segment spans residues 406 to 571 (SREFKRAFLR…DYSHLRETDI (166 aa)). Residue C419 is the site of S-palmitoyl cysteine attachment. A disordered region spans residues 465–487 (LPAPEATDTPSAPEAQAPVVGRR).

The protein belongs to the G-protein coupled receptor 1 family. Adrenergic receptor subfamily. ADRA1D sub-subfamily. As to quaternary structure, interacts with FLNA (via filamin repeat 21); increases PKA-mediated phosphorylation of FLNA. In terms of processing, palmitoylated. Palmitoylation by ZDHHC21 may increase the expression of the receptor and regulate downstream signaling.

It is found in the cell membrane. This alpha-adrenergic receptor mediates its effect through the influx of extracellular calcium. The polypeptide is Alpha-1D adrenergic receptor (ADRA1D) (Sus scrofa (Pig)).